The sequence spans 238 residues: Zwei Ig domain protein zig-2 (238 aa).

Residues 1–17 (MLKFTAISFVLLNAAES) form the signal peptide. In terms of domain architecture, Ig-like C2-type 1 spans 31–130 (PLLKFTRTPN…NGLTKLEHVA (100 aa)). 2 N-linked (GlcNAc...) asparagine glycosylation sites follow: asparagine 40 and asparagine 43. Cysteine 54 and cysteine 117 are oxidised to a cystine. Asparagine 137, asparagine 206, and asparagine 216 each carry an N-linked (GlcNAc...) asparagine glycan. The Ig-like C2-type 2 domain maps to 149-230 (PFISMTVDFR…NHFGETTAIT (82 aa)). Residues cysteine 170 and cysteine 217 are joined by a disulfide bond.

Expressed in PVT neurons and weakly in some head neurons.

The protein resides in the secreted. Functionally, probably not involved in maintaining the position of ASI and ASH head neuron cell bodies and ventral nerve cord axons of PVQ, PVP, RMEV, AVK and HSN neurons. This Caenorhabditis elegans protein is Zwei Ig domain protein zig-2.